Here is a 92-residue protein sequence, read N- to C-terminus: Small ribosomal subunit protein uS19 (92 aa).

It belongs to the universal ribosomal protein uS19 family.

Protein S19 forms a complex with S13 that binds strongly to the 16S ribosomal RNA. In Shewanella amazonensis (strain ATCC BAA-1098 / SB2B), this protein is Small ribosomal subunit protein uS19.